A 465-amino-acid polypeptide reads, in one-letter code: Mitochondrial-processing peptidase subunit beta (465 aa).

H79 contacts Zn(2+). E82 functions as the Proton acceptor in the catalytic mechanism. Zn(2+) is bound by residues H83 and E159.

Belongs to the peptidase M16 family. As to quaternary structure, heterodimer of an alpha subunit and a beta subunit subunits, forming the mitochondrial processing protease (MPP) in which the alpha subunit is involved in substrate recognition and binding and the beta subunit is the catalytic subunit. Zn(2+) serves as cofactor.

It localises to the mitochondrion matrix. It catalyses the reaction Release of N-terminal transit peptides from precursor proteins imported into the mitochondrion, typically with Arg in position P2.. With respect to regulation, binding to the alpha subunit is required for catalytic activity. In terms of biological role, catalytic subunit of the essential mitochondrial processing protease (MPP), which cleaves the mitochondrial sequence off newly imported precursors proteins. Preferentially, cleaves after an arginine at position P2. The protein is Mitochondrial-processing peptidase subunit beta (MPP1) of Blastocladiella emersonii (Aquatic fungus).